The primary structure comprises 104 residues: Thioredoxin-3 (104 aa).

Positions S2–I104 constitute a Thioredoxin domain. Active-site nucleophile residues include C31 and C34. A disulfide bridge connects residues C31 and C34.

It belongs to the thioredoxin family.

Participates in various redox reactions through the reversible oxidation of its active center dithiol to a disulfide and catalyzes dithiol-disulfide exchange reactions. The protein is Thioredoxin-3 (trxC) of Dictyostelium discoideum (Social amoeba).